Here is an 85-residue protein sequence, read N- to C-terminus: U4-theraphotoxin-Hhn1s (85 aa).

An N-terminal signal peptide occupies residues 1–22 (MKVTLIAILTCAAVLVLHTTAA). Residues 23–48 (EELEAESQLMEVGMPDTELAAVDEER) constitute a propeptide that is removed on maturation. 3 disulfides stabilise this stretch: Cys52–Cys66, Cys56–Cys77, and Cys71–Cys82.

It belongs to the neurotoxin 12 (Hwtx-2) family. 02 (Hwtx-2) subfamily. Expressed by the venom gland.

It is found in the secreted. Functionally, postsynaptic neurotoxin. The protein is U4-theraphotoxin-Hhn1s of Cyriopagopus hainanus (Chinese bird spider).